The primary structure comprises 515 residues: Maturase K (515 aa).

It belongs to the intron maturase 2 family. MatK subfamily.

The protein localises to the plastid. It is found in the chloroplast. Usually encoded in the trnK tRNA gene intron. Probably assists in splicing its own and other chloroplast group II introns. This is Maturase K from Cedrus atlantica (Atlas cedar).